The primary structure comprises 509 residues: Maturase K (509 aa).

The protein belongs to the intron maturase 2 family. MatK subfamily.

It is found in the plastid. It localises to the chloroplast. In terms of biological role, usually encoded in the trnK tRNA gene intron. Probably assists in splicing its own and other chloroplast group II introns. In Solanum bulbocastanum (Wild potato), this protein is Maturase K.